The primary structure comprises 413 residues: F-box/kelch-repeat protein At5g26960 (413 aa).

One can recognise an F-box domain in the interval 41 to 90 (SATIASLPDDLLLECISRVPSSSIPSLAVVCRRWSRLLHSPYFLHLRRRL). Kelch repeat units follow at residues 96–141 (SLFA…YGSL), 152–191 (RVYV…VVSG), 192–238 (KIYV…AVDG), 240–295 (FYVI…AAVG), and 367–413 (LLRR…CVEW).

In Arabidopsis thaliana (Mouse-ear cress), this protein is F-box/kelch-repeat protein At5g26960.